A 255-amino-acid polypeptide reads, in one-letter code: MLQISHLYADYGGKPALEDINLTLESGELLVVLGPSGCGKTTLLNLIAGFVPYQHGSIQLAGKRIEGPGAERGVVFQNEGLLPWRNVQDNVAFGLQLAGIEKMQRLEIAHQMLKKVGLEGAEKRYIWQLSGGQRQRVGIARALAANPQLLLLDEPFGALDAFTRDQMQTLLLKLWQETGKQVLLITHDIEEAVFMATELVLLSSGPGRVLERLPLNFARRFVAGESSRSIKSDPQFIAMREYVLSRVFEQREAFS.

Residues 2 to 229 (LQISHLYADY…RFVAGESSRS (228 aa)) enclose the ABC transporter domain. 34–41 (GPSGCGKT) contacts ATP.

It belongs to the ABC transporter superfamily. Taurine importer (TC 3.A.1.17.1) family. The complex is composed of two ATP-binding proteins (TauB), two transmembrane proteins (TauC) and a solute-binding protein (TauA).

The protein resides in the cell inner membrane. The catalysed reaction is taurine(out) + ATP + H2O = taurine(in) + ADP + phosphate + H(+). Functionally, part of the ABC transporter complex TauABC involved in taurine import. Responsible for energy coupling to the transport system. The chain is Taurine import ATP-binding protein TauB from Escherichia coli (strain K12).